Here is a 388-residue protein sequence, read N- to C-terminus: 3beta-hydroxysteroid dehydrogenase dhs-16 (388 aa).

Residues Leu-2–Val-22 form a helical membrane-spanning segment. The active-site Proton acceptor is Tyr-188. 2 helical membrane-spanning segments follow: residues Ala-300–Ala-320 and Ile-346–Phe-366.

Belongs to the short-chain dehydrogenases/reductases (SDR) family. In terms of tissue distribution, strongly expressed in the hypodermis and posterior pharyngeal bulb and in a number of unidentified neurons of the head and tail.

Its subcellular location is the membrane. The enzyme catalyses lathosterol + NAD(+) = 5alpha-cholest-7-en-3-one + NADH + H(+). The protein operates within steroid hormone biosynthesis; dafachronic acid biosynthesis. In terms of biological role, 3beta-hydroxysteroid dehydrogenase that converts 3beta-hydroxysteroids to 3-ketosteroids, an essential step in the production of dafachronic acids from cholesterol. Catalyzes the dehydrogenation of lathosterol (5alpha-cholest-7-en-3beta-ol) to lathosterone (5alpha-cholest-7-en-3-one), a step required for maximal biosynthesis of Delta(7)-dafachronic acid. Dafachronic acids act as ligands and bind directly to the nuclear hormone receptor (NHR) daf-12, suppressing dauer formation and inducing reproductive growth, they can also regulate C.elegans lifespan. This is 3beta-hydroxysteroid dehydrogenase dhs-16 (dhs-16) from Caenorhabditis elegans.